The primary structure comprises 71 residues: Omega-conotoxin-like CnVIIF (71 aa).

Disulfide bonds link cysteine 46-cysteine 61, cysteine 53-cysteine 65, and cysteine 60-cysteine 70. Cysteine 70 bears the Cysteine amide; in CnVIID mark.

It belongs to the conotoxin M superfamily. Expressed by the venom duct.

It is found in the secreted. Functionally, omega-conotoxins act at presynaptic membranes, they bind and block voltage-gated calcium channels (Cav). This Conus consors (Singed cone) protein is Omega-conotoxin-like CnVIIF.